A 188-amino-acid chain; its full sequence is dCTP deaminase (188 aa).

Residues 111–116 (KSTYAR), 135–137 (TLE), Q156, Y170, and Q180 contribute to the dCTP site. The Proton donor/acceptor role is filled by E137.

The protein belongs to the dCTP deaminase family. Homotrimer.

It catalyses the reaction dCTP + H2O + H(+) = dUTP + NH4(+). Its pathway is pyrimidine metabolism; dUMP biosynthesis; dUMP from dCTP (dUTP route): step 1/2. In terms of biological role, catalyzes the deamination of dCTP to dUTP. The chain is dCTP deaminase from Cupriavidus pinatubonensis (strain JMP 134 / LMG 1197) (Cupriavidus necator (strain JMP 134)).